Here is an 882-residue protein sequence, read N- to C-terminus: Alanine--tRNA ligase (882 aa).

Residues His576, His580, Cys678, and His682 each contribute to the Zn(2+) site.

The protein belongs to the class-II aminoacyl-tRNA synthetase family. Zn(2+) is required as a cofactor.

Its subcellular location is the cytoplasm. It carries out the reaction tRNA(Ala) + L-alanine + ATP = L-alanyl-tRNA(Ala) + AMP + diphosphate. Its function is as follows. Catalyzes the attachment of alanine to tRNA(Ala) in a two-step reaction: alanine is first activated by ATP to form Ala-AMP and then transferred to the acceptor end of tRNA(Ala). Also edits incorrectly charged Ser-tRNA(Ala) and Gly-tRNA(Ala) via its editing domain. The sequence is that of Alanine--tRNA ligase from Anaplasma marginale (strain St. Maries).